The sequence spans 211 residues: Uracil phosphoribosyltransferase (211 aa).

Residues Arg78, Arg103, and 130–138 contribute to the 5-phospho-alpha-D-ribose 1-diphosphate site; that span reads DPMLATGAT. Residues Ile195 and 200–202 each bind uracil; that span reads GDA. Asp201 serves as a coordination point for 5-phospho-alpha-D-ribose 1-diphosphate.

This sequence belongs to the UPRTase family. Mg(2+) is required as a cofactor.

The catalysed reaction is UMP + diphosphate = 5-phospho-alpha-D-ribose 1-diphosphate + uracil. Its pathway is pyrimidine metabolism; UMP biosynthesis via salvage pathway; UMP from uracil: step 1/1. Its activity is regulated as follows. Allosterically activated by GTP. Catalyzes the conversion of uracil and 5-phospho-alpha-D-ribose 1-diphosphate (PRPP) to UMP and diphosphate. The chain is Uracil phosphoribosyltransferase from Renibacterium salmoninarum (strain ATCC 33209 / DSM 20767 / JCM 11484 / NBRC 15589 / NCIMB 2235).